Reading from the N-terminus, the 557-residue chain is Potassium-transporting ATPase potassium-binding subunit (557 aa).

10 helical membrane passes run 6-26, 59-79, 127-147, 172-192, 247-267, 278-298, 363-383, 410-430, 475-495, and 520-540; these read IQLL…GLGL, ALSL…ILFF, AGLT…LLAL, LYVL…FGVV, ISNF…VFLY, WAIF…VWTF, IVFG…LLTV, ILGI…SVSV, VMIA…VLVI, and FYIL…FPVL.

This sequence belongs to the KdpA family. In terms of assembly, the system is composed of three essential subunits: KdpA, KdpB and KdpC.

It localises to the cell inner membrane. In terms of biological role, part of the high-affinity ATP-driven potassium transport (or Kdp) system, which catalyzes the hydrolysis of ATP coupled with the electrogenic transport of potassium into the cytoplasm. This subunit binds the periplasmic potassium ions and delivers the ions to the membrane domain of KdpB through an intramembrane tunnel. The polypeptide is Potassium-transporting ATPase potassium-binding subunit (Leptospira interrogans serogroup Icterohaemorrhagiae serovar Lai (strain 56601)).